A 321-amino-acid chain; its full sequence is NADPH-dependent codeinone reductase 1-1 (321 aa).

Residues Thr27 and Asp51 each contribute to the NADPH site. Catalysis depends on proton donor residues Tyr56 and His119. His119 lines the substrate pocket. Gln187, Ser214, Leu216, Ser264, and Arg269 together coordinate NADPH.

This sequence belongs to the aldo/keto reductase family. Latex secreting cells (laticifer cells). Expressed constitutively and ubiquitously with highest levels in capsules. Restricted to the parietal region of sieve elements adjacent or proximal to laticifers in roots, stems, leaves and carpels.

The protein resides in the cytoplasm. Its subcellular location is the cytosol. It carries out the reaction codeine + NADP(+) = codeinone + NADPH + H(+). The enzyme catalyses neopine + NADP(+) = neopinone + NADPH + H(+). It catalyses the reaction morphine + NADP(+) = morphinone + NADPH + H(+). The catalysed reaction is neomorphine + NADP(+) = neomorphinone + NADPH + H(+). Its pathway is alkaloid biosynthesis; morphine biosynthesis. In terms of biological role, NADPH-dependent reductase involved in biosynthesis of morphinan-type benzylisoquinoline and opiate alkaloids natural products. Reduces codeinone to codeine in the penultimate step in morphine biosynthesis. Can use morphinone, hydrocodone and hydromorphone as substrate during reductive reaction with NADPH as cofactor, and morphine and dihydrocodeine as substrate during oxidative reaction with NADP as cofactor. Converts morphinone to morphine, and neomorphinone to neomorphine. Reduces irreversibly neopinone, a spontaneous isomer of codeinone, to neopine; in planta, neopine levels are limited to low levels. This Papaver somniferum (Opium poppy) protein is NADPH-dependent codeinone reductase 1-1.